We begin with the raw amino-acid sequence, 319 residues long: 2-oxoglutarate and iron-dependent oxygenase domain-containing protein 3 (319 aa).

Residues 1 to 34 form a disordered region; that stretch reads MAPQRRAATKAPEGNGAAERRNRSSTKKDRAPRE. Over 1–42 the chain is Cytoplasmic; that stretch reads MAPQRRAATKAPEGNGAAERRNRSSTKKDRAPREVQRLWQRP. The span at 18 to 34 shows a compositional bias: basic and acidic residues; that stretch reads AERRNRSSTKKDRAPRE. Residues 43–65 traverse the membrane as a helical; Signal-anchor for type II membrane protein segment; sequence WLRTAGLGAGFVLTALLLWSSLG. Over 66–319 the chain is Lumenal; sequence ADDGVAEVLA…DHGIEDPAFP (254 aa). Positions 207-309 constitute a Fe2OG dioxygenase domain; it reads KPTFFSRINS…AITIAFSCNP (103 aa). Asn215 is a glycosylation site (N-linked (GlcNAc...) asparagine). 3 residues coordinate Fe cation: His230, Asp232, and His288. Arg298 is an active-site residue. Arg298 contacts 2-oxoglutarate.

The protein belongs to the OGFOD3 family. Fe(2+) is required as a cofactor. L-ascorbate serves as cofactor.

It localises to the membrane. This Homo sapiens (Human) protein is 2-oxoglutarate and iron-dependent oxygenase domain-containing protein 3 (OGFOD3).